The following is an 88-amino-acid chain: Cell division topological specificity factor (88 aa).

The protein belongs to the MinE family.

Prevents the cell division inhibition by proteins MinC and MinD at internal division sites while permitting inhibition at polar sites. This ensures cell division at the proper site by restricting the formation of a division septum at the midpoint of the long axis of the cell. This chain is Cell division topological specificity factor, found in Acidovorax ebreus (strain TPSY) (Diaphorobacter sp. (strain TPSY)).